The primary structure comprises 221 residues: Large ribosomal subunit protein uL16A (221 aa).

The protein belongs to the universal ribosomal protein uL16 family. As to quaternary structure, component of the large ribosomal subunit (LSU). Mature yeast ribosomes consist of a small (40S) and a large (60S) subunit. The 40S small subunit contains 1 molecule of ribosomal RNA (18S rRNA) and at least 33 different proteins. The large 60S subunit contains 3 rRNA molecules (25S, 5.8S and 5S rRNA) and at least 46 different proteins.

The protein localises to the cytoplasm. Functionally, component of the ribosome, a large ribonucleoprotein complex responsible for the synthesis of proteins in the cell. The small ribosomal subunit (SSU) binds messenger RNAs (mRNAs) and translates the encoded message by selecting cognate aminoacyl-transfer RNA (tRNA) molecules. The large subunit (LSU) contains the ribosomal catalytic site termed the peptidyl transferase center (PTC), which catalyzes the formation of peptide bonds, thereby polymerizing the amino acids delivered by tRNAs into a polypeptide chain. The nascent polypeptides leave the ribosome through a tunnel in the LSU and interact with protein factors that function in enzymatic processing, targeting, and the membrane insertion of nascent chains at the exit of the ribosomal tunnel. The protein is Large ribosomal subunit protein uL16A (rpl1001) of Schizosaccharomyces pombe (strain 972 / ATCC 24843) (Fission yeast).